A 433-amino-acid polypeptide reads, in one-letter code: GTPase Obg (433 aa).

In terms of domain architecture, Obg spans 1 to 158; the sequence is MFVDQVKIYV…RNVILELKLL (158 aa). The OBG-type G domain occupies 159–329; sequence ADVGLVGFPS…LLFAIADLLE (171 aa). GTP contacts are provided by residues 165–172, 190–194, 212–215, 282–285, and 310–312; these read GFPSVGKS, FTTLV, DLPG, NKMD, and SAA. Residues Ser-172 and Thr-192 each coordinate Mg(2+). Positions 350 to 428 constitute an OCT domain; the sequence is KYEKEELPFT…LLDYEFEFVD (79 aa).

Belongs to the TRAFAC class OBG-HflX-like GTPase superfamily. OBG GTPase family. In terms of assembly, monomer. The cofactor is Mg(2+).

It is found in the cytoplasm. Functionally, an essential GTPase which binds GTP, GDP and possibly (p)ppGpp with moderate affinity, with high nucleotide exchange rates and a fairly low GTP hydrolysis rate. Plays a role in control of the cell cycle, stress response, ribosome biogenesis and in those bacteria that undergo differentiation, in morphogenesis control. This chain is GTPase Obg, found in Geobacillus thermodenitrificans (strain NG80-2).